The primary structure comprises 352 residues: DNA polymerase IV (352 aa).

The UmuC domain occupies 6–187 (IIHIDCDCFY…LPVSKLHGVG (182 aa)). D10 and D105 together coordinate Mg(2+). E106 is an active-site residue.

Belongs to the DNA polymerase type-Y family. In terms of assembly, monomer. The cofactor is Mg(2+).

The protein localises to the cytoplasm. It catalyses the reaction DNA(n) + a 2'-deoxyribonucleoside 5'-triphosphate = DNA(n+1) + diphosphate. Functionally, poorly processive, error-prone DNA polymerase involved in untargeted mutagenesis. Copies undamaged DNA at stalled replication forks, which arise in vivo from mismatched or misaligned primer ends. These misaligned primers can be extended by PolIV. Exhibits no 3'-5' exonuclease (proofreading) activity. May be involved in translesional synthesis, in conjunction with the beta clamp from PolIII. The chain is DNA polymerase IV from Ectopseudomonas mendocina (strain ymp) (Pseudomonas mendocina).